We begin with the raw amino-acid sequence, 214 residues long: Cdc42 effector protein 2 (214 aa).

Ser2 is modified (N-acetylserine). Residues 30 to 44 form the CRIB domain; it reads ISPPLGDFRHTIHIG. Phosphoserine is present on residues Ser31, Ser101, Ser137, Ser141, and Ser145. The tract at residues 118 to 151 is disordered; sequence ALTLPTTQAPPKPPRLHLESPQPSPKSSPQEAGN.

It belongs to the BORG/CEP family. As to quaternary structure, interacts with CDC42 and RHOQ, in a GTP-dependent manner, and with SEPT7.

The protein resides in the endomembrane system. The protein localises to the cytoplasm. It localises to the cytoskeleton. Functionally, probably involved in the organization of the actin cytoskeleton. May act downstream of CDC42 to induce actin filament assembly leading to cell shape changes. Induces pseudopodia formation in fibroblasts in a CDC42-dependent manner. The protein is Cdc42 effector protein 2 (Cdc42ep2) of Rattus norvegicus (Rat).